A 1929-amino-acid chain; its full sequence is Myoferlin (1929 aa).

Positions 1 to 53 (MISYEPPPSAISNPTDPGGTTIIQGDGENDEEEDRDIVDAGFNPSVPGAPGQT) are disordered. Residues 27-36 (GENDEEEDRD) show a composition bias toward acidic residues. 2 consecutive C2 domains span residues 62–179 (VKGK…RKWV) and 218–354 (EDDD…EEYD). The Ca(2+) site is built by Asp267, Asp275, Asp323, Asp325, and Asp331. The segment covering 898 to 907 (RRLVRKRKKD) has biased composition (basic residues). Residues 898 to 918 (RRLVRKRKKDPKVSTTSKAAL) are disordered. C2 domains follow at residues 996 to 1124 (GANT…LLWY), 1159 to 1283 (RAPQ…TKHE), 1408 to 1527 (IPYP…SHCG), and 1645 to 1793 (GPPG…EKCS). Ca(2+) is bound by residues Asp1028, Asp1034, Asp1090, and Asp1092. Ca(2+) contacts are provided by Asp1442, Asp1448, Asp1497, Asp1499, Asp1764, Ser1767, and Asp1770. The span at 1845-1858 (DAEERPAGKGRDEP) shows a compositional bias: basic and acidic residues. The segment at 1845 to 1867 (DAEERPAGKGRDEPNMNPKLDPP) is disordered. The helical transmembrane segment at 1894 to 1914 (WVFIGLIILLLVLLFLGVFFY) threads the bilayer.

It belongs to the ferlin family. The cofactor is Ca(2+).

Its subcellular location is the cell membrane. It localises to the nucleus membrane. The protein localises to the cytoplasmic vesicle membrane. May play a role in membrane regeneration and repair. This Xenopus tropicalis (Western clawed frog) protein is Myoferlin (myof).